Here is a 204-residue protein sequence, read N- to C-terminus: Sex-determining region Y protein (204 aa).

The sufficient for interaction with KPNB1 stretch occupies residues 59 to 136 (RVKRPMNAFI…YKYRPRRKAK (78 aa)). The segment at residues 60–128 (VKRPMNAFIV…MHREKYPNYK (69 aa)) is a DNA-binding region (HMG box). 2 required for nuclear localization regions span residues 61-77 (KRPM…QRRK) and 130-136 (RPRRKAK). A sufficient for interaction with EP300 region spans residues 107 to 139 (WPFFQEAQKLQAMHREKYPNYKYRPRRKAKMLP). N6-acetyllysine is present on lysine 136. The necessary for interaction with ZNF208 isoform KRAB-O stretch occupies residues 138–155 (LPKNCSLLPADPASVLCS). A disordered region spans residues 175 to 204 (RMEHQLGHLPPINAASSPQQRDRYSHWTKL). The span at 194 to 204 (QRDRYSHWTKL) shows a compositional bias: basic and acidic residues. Positions 198–204 (YSHWTKL) are necessary for interaction with SLC9A3R2.

It belongs to the SRY family. Interacts with CALM, EP300, HDAC3, KPNB1, ZNF208 isoform KRAB-O, PARP1, SLC9A3R2 and WT1. The interaction with EP300 modulates its DNA-binding activity. The interaction with KPNB1 is sensitive to dissociation by Ran in the GTP-bound form. Interaction with PARP1 impaired its DNA-binding activity. In terms of processing, phosphorylated on serine residues by PKA. Phosphorylation by PKA enhances its DNA-binding activity and stimulates transcription repression. Acetylation of Lys-136 contributes to its nuclear localization and enhances its interaction with KPNB1. Deacetylated by HDAC3. Post-translationally, poly-ADP-ribosylated by PARP1. ADP-ribosylation reduces its DNA-binding activity.

Its subcellular location is the nucleus speckle. The protein resides in the cytoplasm. The protein localises to the nucleus. Its function is as follows. Transcriptional regulator that controls a genetic switch in male development. It is necessary and sufficient for initiating male sex determination by directing the development of supporting cell precursors (pre-Sertoli cells) as Sertoli rather than granulosa cells. Involved in different aspects of gene regulation including promoter activation or repression. Binds to the DNA consensus sequence 5'-[AT]AACAA[AT]-3'. SRY HMG box recognizes DNA by partial intercalation in the minor groove and promotes DNA bending. Also involved in pre-mRNA splicing. In male adult brain involved in the maintenance of motor functions of dopaminergic neurons. The chain is Sex-determining region Y protein from Homo sapiens (Human).